The primary structure comprises 169 residues: NSSYRIISIGRGALGGDVYLGKSPNSDAPCPDGVFRYNSDVGPSGTPVRFIPLSTNIFEDQLLNIQFNIPTVKLCVSYTIWKVGNLNAYFRTMLLETGGTIGQADNSYFKIVKSSKIGYNLLSCPFTSIICLRCPEDQFCAKVGVVIQNGKRRLALVNENPLDVLFQEV.

A glycan (N-linked (GlcNAc...) asparagine) is linked at N1. Intrachain disulfides connect C30–C75 and C124–C134.

Belongs to the protease inhibitor I3 (leguminous Kunitz-type inhibitor) family.

The protein resides in the vacuole. Its function is as follows. Inhibitor of cathepsin D (aspartic protease). May also inhibit trypsin and chymotrypsin (serine proteases). Protects the plant by inhibiting proteases of invading organisms. The chain is Aspartic protease inhibitor 3 from Solanum tuberosum (Potato).